The primary structure comprises 231 residues: Octanoyltransferase (231 aa).

The BPL/LPL catalytic domain maps to 49–227 (PHLPEAVWLL…ALAARFHLAW (179 aa)). Residues 91 to 98 (RGGEVTHH), 158 to 160 (AIG), and 171 to 173 (GLA) contribute to the substrate site. C189 serves as the catalytic Acyl-thioester intermediate.

It belongs to the LipB family.

Its subcellular location is the cytoplasm. It carries out the reaction octanoyl-[ACP] + L-lysyl-[protein] = N(6)-octanoyl-L-lysyl-[protein] + holo-[ACP] + H(+). It participates in protein modification; protein lipoylation via endogenous pathway; protein N(6)-(lipoyl)lysine from octanoyl-[acyl-carrier-protein]: step 1/2. Its function is as follows. Catalyzes the transfer of endogenously produced octanoic acid from octanoyl-acyl-carrier-protein onto the lipoyl domains of lipoate-dependent enzymes. Lipoyl-ACP can also act as a substrate although octanoyl-ACP is likely to be the physiological substrate. This is Octanoyltransferase from Parasynechococcus marenigrum (strain WH8102).